We begin with the raw amino-acid sequence, 363 residues long: Protein RecA (363 aa).

78-85 (GPESGGKT) is a binding site for ATP.

This sequence belongs to the RecA family.

Its subcellular location is the cytoplasm. Functionally, can catalyze the hydrolysis of ATP in the presence of single-stranded DNA, the ATP-dependent uptake of single-stranded DNA by duplex DNA, and the ATP-dependent hybridization of homologous single-stranded DNAs. It interacts with LexA causing its activation and leading to its autocatalytic cleavage. Probably involved in base excision repair. In terms of biological role, following severe irradiation (7 kGy of gamma irradiation) genomic DNA is fragmented. DNA is progressively degraded for the first 1.5 hours after IR, in a step promoted by RecA and counterbalanced by DNA Pol I and Pol III, followed by massive DNA synthesis and genome reassembly in the next hour. Optimal priming of DNA synthesis requires both RecA and RadA, Pol III initiates DNA synthesis while both Pol I and Pol III are required for its continuation. In the absence of RecA the majority of the chromosome is still reconstituted, via either single-strand annealing or non-homologous end joining. This Deinococcus radiodurans (strain ATCC 13939 / DSM 20539 / JCM 16871 / CCUG 27074 / LMG 4051 / NBRC 15346 / NCIMB 9279 / VKM B-1422 / R1) protein is Protein RecA.